Here is a 79-residue protein sequence, read N- to C-terminus: Neurotoxin ShK-like1 (79 aa).

The first 25 residues, 1–25 (MSRKLLAVLMVCTFFLIAASMGTNA), serve as a signal peptide directing secretion. Residues 26 to 35 (LPFHEGIERR) constitute a propeptide that is removed on maturation. The ShKT domain maps to 39 to 78 (CVDKMPFVCMRKDIPAICKNRNHRSYAFIMDVCRKTCGQC). 3 disulfide bridges follow: cysteine 39–cysteine 78, cysteine 47–cysteine 71, and cysteine 56–cysteine 75.

Expressed in nematocytes (in planulae and primary polyps). Is localized predominantly in the body column nematocytes and not in the tentacles (in primary polyps).

It is found in the nematocyst. The protein localises to the secreted. Its function is as follows. Neurotoxin. In vivo, induces contraction paralysis followed by death (within 2 hours) on zebrafish larvae. Also induces body contraction in Nematostella 11-dpf polyps. This chain is Neurotoxin ShK-like1, found in Nematostella vectensis (Starlet sea anemone).